The sequence spans 459 residues: Elongation factor 1-alpha (459 aa).

The residue at position 2 (Gly2) is a N,N,N-trimethylglycine. N6,N6-dimethyllysine; alternate is present on Lys3. Lys3 is modified (N6-methyllysine; alternate). Residues 5 to 240 (KLHVNVVVIG…DAIEPPTRPT (236 aa)) form the tr-type G domain. Positions 14 to 21 (GHVDSGKS) are G1. Residue 14–21 (GHVDSGKS) coordinates GTP. Lys30 is modified (N6-methyllysine). Positions 70 to 74 (GITID) are G2. At Lys79 the chain carries N6,N6,N6-trimethyllysine. Residues 91–94 (DAPG) are G3. Residues 91-95 (DAPGH) and 153-156 (NKMD) contribute to the GTP site. The G4 stretch occupies residues 153-156 (NKMD). Residues 192-194 (SGW) form a G5 region. Position 316 is an N6,N6-dimethyllysine; alternate (Lys316). Lys316 is modified (N6-methyllysine; alternate). Lys390 carries the N6-methyllysine modification.

It belongs to the TRAFAC class translation factor GTPase superfamily. Classic translation factor GTPase family. EF-Tu/EF-1A subfamily.

The protein resides in the cytoplasm. In terms of biological role, this protein promotes the GTP-dependent binding of aminoacyl-tRNA to the A-site of ribosomes during protein biosynthesis. The protein is Elongation factor 1-alpha (TEF1) of Cryptococcus neoformans var. neoformans serotype D (strain B-3501A) (Filobasidiella neoformans).